A 303-amino-acid polypeptide reads, in one-letter code: Diaminopimelate epimerase (303 aa).

Substrate is bound by residues Asn-15, Gln-47, and Asn-67. Cys-76 functions as the Proton donor in the catalytic mechanism. Residues 77 to 78 (GN), Asn-163, Asn-197, and 215 to 216 (ER) contribute to the substrate site. Cys-224 (proton acceptor) is an active-site residue. Residue 225–226 (GS) participates in substrate binding. The disordered stretch occupies residues 278-303 (FDPATGEWSRDTQGLQGSGNADRGAA).

The protein belongs to the diaminopimelate epimerase family. Homodimer.

The protein resides in the cytoplasm. The catalysed reaction is (2S,6S)-2,6-diaminopimelate = meso-2,6-diaminopimelate. The protein operates within amino-acid biosynthesis; L-lysine biosynthesis via DAP pathway; DL-2,6-diaminopimelate from LL-2,6-diaminopimelate: step 1/1. In terms of biological role, catalyzes the stereoinversion of LL-2,6-diaminopimelate (L,L-DAP) to meso-diaminopimelate (meso-DAP), a precursor of L-lysine and an essential component of the bacterial peptidoglycan. This Brucella melitensis biotype 1 (strain ATCC 23456 / CCUG 17765 / NCTC 10094 / 16M) protein is Diaminopimelate epimerase.